Here is a 108-residue protein sequence, read N- to C-terminus: Evasin P1127 (108 aa).

The signal sequence occupies residues 1–28 (MEAKTFAFLEIAMFIALGIQTFVAVTDA). 3 disulfide bridges follow: Cys41–Cys63, Cys45–Cys65, and Cys56–Cys76. The N-linked (GlcNAc...) asparagine glycan is linked to Asn44. The N-linked (GlcNAc...) asparagine glycan is linked to Asn89.

It is found in the secreted. Functionally, salivary chemokine-binding protein which binds to host chemokines CXCL1, CXCL2, CXCL3, CXCL5 and CXCL8. This is Evasin P1127 from Ixodes ricinus (Common tick).